The following is a 336-amino-acid chain: tRNA N6-adenosine threonylcarbamoyltransferase (336 aa).

Positions 114 and 118 each coordinate Fe cation. Residues 136 to 140, Asp169, Gly182, Asp186, and Asn275 contribute to the substrate site; that span reads LVSGG. Asp301 contributes to the Fe cation binding site.

Belongs to the KAE1 / TsaD family. The cofactor is Fe(2+).

The protein localises to the cytoplasm. It catalyses the reaction L-threonylcarbamoyladenylate + adenosine(37) in tRNA = N(6)-L-threonylcarbamoyladenosine(37) in tRNA + AMP + H(+). Its function is as follows. Required for the formation of a threonylcarbamoyl group on adenosine at position 37 (t(6)A37) in tRNAs that read codons beginning with adenine. Is involved in the transfer of the threonylcarbamoyl moiety of threonylcarbamoyl-AMP (TC-AMP) to the N6 group of A37, together with TsaE and TsaB. TsaD likely plays a direct catalytic role in this reaction. The chain is tRNA N6-adenosine threonylcarbamoyltransferase from Streptococcus pneumoniae (strain ATCC 700669 / Spain 23F-1).